The following is a 341-amino-acid chain: Biotin synthase (341 aa).

A Radical SAM core domain is found at 40-267 (AEIQVSTLLS…RSMVRLSAGR (228 aa)). [4Fe-4S] cluster contacts are provided by C55, C59, and C62. [2Fe-2S] cluster contacts are provided by C99, C130, C190, and R262.

It belongs to the radical SAM superfamily. Biotin synthase family. As to quaternary structure, homodimer. It depends on [4Fe-4S] cluster as a cofactor. Requires [2Fe-2S] cluster as cofactor.

The enzyme catalyses (4R,5S)-dethiobiotin + (sulfur carrier)-SH + 2 reduced [2Fe-2S]-[ferredoxin] + 2 S-adenosyl-L-methionine = (sulfur carrier)-H + biotin + 2 5'-deoxyadenosine + 2 L-methionine + 2 oxidized [2Fe-2S]-[ferredoxin]. It participates in cofactor biosynthesis; biotin biosynthesis; biotin from 7,8-diaminononanoate: step 2/2. In terms of biological role, catalyzes the conversion of dethiobiotin (DTB) to biotin by the insertion of a sulfur atom into dethiobiotin via a radical-based mechanism. The chain is Biotin synthase from Xylella fastidiosa (strain 9a5c).